We begin with the raw amino-acid sequence, 140 residues long: Nucleoside diphosphate kinase (140 aa).

Lys-11, Phe-59, Arg-87, Thr-93, Arg-104, and Asn-114 together coordinate ATP. The active-site Pros-phosphohistidine intermediate is His-117.

The protein belongs to the NDK family. Homotetramer. Mg(2+) serves as cofactor.

It localises to the cytoplasm. It catalyses the reaction a 2'-deoxyribonucleoside 5'-diphosphate + ATP = a 2'-deoxyribonucleoside 5'-triphosphate + ADP. The catalysed reaction is a ribonucleoside 5'-diphosphate + ATP = a ribonucleoside 5'-triphosphate + ADP. In terms of biological role, major role in the synthesis of nucleoside triphosphates other than ATP. The ATP gamma phosphate is transferred to the NDP beta phosphate via a ping-pong mechanism, using a phosphorylated active-site intermediate. This Granulibacter bethesdensis (strain ATCC BAA-1260 / CGDNIH1) protein is Nucleoside diphosphate kinase.